Here is an 859-residue protein sequence, read N- to C-terminus: Toll-like receptor 5 (859 aa).

The N-terminal stretch at 1–26 (MACQLDLLIGVIFMASPVLVISPCSS) is a signal peptide. Topologically, residues 27 to 641 (DGRIAFFRGC…EEEAMRSLKF (615 aa)) are extracellular. N-linked (GlcNAc...) asparagine glycosylation is found at Asn-37, Asn-46, and Asn-84. LRR repeat units lie at residues 45-69 (LNTT…SFPL), 72-94 (RLQL…AFRN), 96-118 (PNLR…AFQG), 121-144 (HLLE…YFRN), 147-167 (SLAR…HSSF), 172-193 (SLSD…ELEP), 198-212 (TLSF…LFSR), 215-230 (VGWE…VRLE), and 235-236 (SE). Asn-246 carries N-linked (GlcNAc...) asparagine glycosylation. LRR repeat units lie at residues 261 to 285 (LKHH…TFAS), 290 to 302 (SVLQ…GFIF), 314 to 335 (DLKM…AFYG), 338 to 356 (SLQV…YNSN), 386 to 402 (TLQT…AIGF), and 413 to 432 (GNKL…LELS). N-linked (GlcNAc...) asparagine glycosylation is present at Asn-343. The N-linked (GlcNAc...) asparagine glycan is linked to Asn-438. 5 LRR repeats span residues 450 to 471 (QLQF…HTPS), 475 to 496 (SLEQ…GLCW), 504 to 525 (RLQI…IFND), 528 to 547 (ALRM…PGSL), and 550 to 568 (NLEI…DPAL). Residues 580–632 (NEFVCNCELSTFISWLNQTNVTLFGSPADVYCMYPNSLLGGSLYNISTEDCDE) enclose the LRRCT domain. 2 disulfide bridges follow: Cys-584/Cys-611 and Cys-586/Cys-630. N-linked (GlcNAc...) asparagine glycans are attached at residues Asn-596, Asn-599, and Asn-624. A helical membrane pass occupies residues 642–662 (SLFILCTVTLTLFLVITLVVI). The Cytoplasmic segment spans residues 663–859 (KFRGICFLCY…IQLRTIATIS (197 aa)). The region spanning 692–837 (YRYDAYFCFS…WFLDKLSGCI (146 aa)) is the TIR domain. Residue Tyr-799 is modified to Phosphotyrosine.

It belongs to the Toll-like receptor family. Homodimer. Interacts with MYD88 (via TIR domain). Interacts with TICAM1 (via TIR domain). Interacts with UNC93B1; this interaction is essential for proper TLR5 localization to the plasma membrane. Post-translationally, phosphorylated at Tyr-799 upon flagellin binding; required for signaling. Highly expressed in liver. Detected in lung and at very low levels in most other tissues.

It is found in the membrane. In terms of biological role, pattern recognition receptor (PRR) located on the cell surface that participates in the activation of innate immunity and inflammatory response. Recognizes small molecular motifs named pathogen-associated molecular pattern (PAMPs) expressed by pathogens and microbe-associated molecular patterns (MAMPs) usually expressed by resident microbiota. Upon ligand binding such as bacterial flagellins, recruits intracellular adapter proteins MYD88 and TRIF leading to NF-kappa-B activation, cytokine secretion and induction of the inflammatory response. Plays thereby an important role in the relationship between the intestinal epithelium and enteric microbes and contributes to the gut microbiota composition throughout life. The chain is Toll-like receptor 5 (Tlr5) from Mus musculus (Mouse).